The sequence spans 471 residues: Bifunctional protein GlmU (471 aa).

The segment at 1–235 (MVAVAILAAG…YQEIFGINNR (235 aa)) is pyrophosphorylase. Residues 7-10 (LAAG), Lys-21, Gln-82, and 87-88 (GT) each bind UDP-N-acetyl-alpha-D-glucosamine. Asp-112 contacts Mg(2+). Residues Gly-149, Glu-164, Asn-179, and Asn-233 each contribute to the UDP-N-acetyl-alpha-D-glucosamine site. Asn-233 is a Mg(2+) binding site. Residues 236–256 (KHLAKAHEILQVRVKDDWMEA) form a linker region. Positions 257-471 (GVTLIDPDSI…SKKEENKSSP (215 aa)) are N-acetyltransferase. Residues Arg-338 and Lys-356 each coordinate UDP-N-acetyl-alpha-D-glucosamine. The active-site Proton acceptor is the His-368. 2 residues coordinate UDP-N-acetyl-alpha-D-glucosamine: Tyr-371 and Asn-382. Acetyl-CoA is bound by residues Ala-385, 391-392 (NY), Ser-410, Ala-428, and Arg-445.

In the N-terminal section; belongs to the N-acetylglucosamine-1-phosphate uridyltransferase family. The protein in the C-terminal section; belongs to the transferase hexapeptide repeat family. In terms of assembly, homotrimer. Mg(2+) is required as a cofactor.

The protein localises to the cytoplasm. The catalysed reaction is alpha-D-glucosamine 1-phosphate + acetyl-CoA = N-acetyl-alpha-D-glucosamine 1-phosphate + CoA + H(+). It carries out the reaction N-acetyl-alpha-D-glucosamine 1-phosphate + UTP + H(+) = UDP-N-acetyl-alpha-D-glucosamine + diphosphate. The protein operates within nucleotide-sugar biosynthesis; UDP-N-acetyl-alpha-D-glucosamine biosynthesis; N-acetyl-alpha-D-glucosamine 1-phosphate from alpha-D-glucosamine 6-phosphate (route II): step 2/2. It participates in nucleotide-sugar biosynthesis; UDP-N-acetyl-alpha-D-glucosamine biosynthesis; UDP-N-acetyl-alpha-D-glucosamine from N-acetyl-alpha-D-glucosamine 1-phosphate: step 1/1. It functions in the pathway bacterial outer membrane biogenesis; LPS lipid A biosynthesis. Functionally, catalyzes the last two sequential reactions in the de novo biosynthetic pathway for UDP-N-acetylglucosamine (UDP-GlcNAc). The C-terminal domain catalyzes the transfer of acetyl group from acetyl coenzyme A to glucosamine-1-phosphate (GlcN-1-P) to produce N-acetylglucosamine-1-phosphate (GlcNAc-1-P), which is converted into UDP-GlcNAc by the transfer of uridine 5-monophosphate (from uridine 5-triphosphate), a reaction catalyzed by the N-terminal domain. The protein is Bifunctional protein GlmU of Trichodesmium erythraeum (strain IMS101).